The following is a 162-amino-acid chain: UPF0114 protein PSPA7_5214 (162 aa).

A run of 3 helical transmembrane segments spans residues 15–35 (LLAP…IKFF), 53–73 (LILV…LVMV), and 136–156 (LMWY…MGYL).

It belongs to the UPF0114 family.

It localises to the cell membrane. The chain is UPF0114 protein PSPA7_5214 from Pseudomonas paraeruginosa (strain DSM 24068 / PA7) (Pseudomonas aeruginosa (strain PA7)).